Consider the following 457-residue polypeptide: Multidrug resistance protein MdtK (457 aa).

The next 12 helical transmembrane spans lie at 11-31 (LLAL…MGVV), 46-66 (AVAV…GLLL), 93-113 (WLAF…DHII), 127-147 (AVGF…FQVL), 160-180 (GMVI…IFIY), 188-208 (LGGV…FLMM), 243-263 (LPVA…ALLV), 278-300 (LNFS…IRVG), 316-336 (YTSI…TVVF), 350-370 (VVVM…SDAI), 387-407 (IFFI…YLLG), and 418-438 (PSGF…LMAL).

This sequence belongs to the multi antimicrobial extrusion (MATE) (TC 2.A.66.1) family. MdtK subfamily.

The protein localises to the cell inner membrane. Its function is as follows. Multidrug efflux pump that functions probably as a Na(+)/drug antiporter. The polypeptide is Multidrug resistance protein MdtK (Yersinia enterocolitica serotype O:8 / biotype 1B (strain NCTC 13174 / 8081)).